Reading from the N-terminus, the 194-residue chain is Endo-1,4-beta-xylanase (194 aa).

An N-acetylglycine modification is found at Gly-1. Positions 1 to 191 constitute a GH11 domain; that stretch reads GTTPNSEGWH…SSGYARITVA (191 aa). Catalysis depends on Glu-86, which acts as the Nucleophile. Cys-110 and Cys-154 are disulfide-bonded. Catalysis depends on Glu-178, which acts as the Proton donor.

The protein belongs to the glycosyl hydrolase 11 (cellulase G) family.

The catalysed reaction is Endohydrolysis of (1-&gt;4)-beta-D-xylosidic linkages in xylans.. It participates in glycan degradation; xylan degradation. This chain is Endo-1,4-beta-xylanase, found in Byssochlamys spectabilis (Paecilomyces variotii).